The sequence spans 483 residues: Cysteine proteinase 1, mitochondrial (483 aa).

The N-terminal 30 residues, 1 to 30 (MLPTSVSRSLYLKTFRSHLLRAPQIVLKRM), are a transit peptide targeting the mitochondrion. Catalysis depends on residues Cys102, His398, and Asn421. A propeptide (removed in mature form; by autocatalysis) is located at residue Lys483.

It belongs to the peptidase C1 family. Homohexamer. Binds to nucleic acids. Binds single-stranded DNA and RNA with higher affinity than double-stranded DNA. The N-terminus of isoform Cytoplasmic is blocked.

It is found in the mitochondrion. Its subcellular location is the cytoplasm. It catalyses the reaction Inactivates bleomycin B2 (a cytotoxic glycometallopeptide) by hydrolysis of a carboxyamide bond of beta-aminoalanine, but also shows general aminopeptidase activity. The specificity varies somewhat with source, but amino acid arylamides of Met, Leu and Ala are preferred.. Inhibited by E64, a specific inhibitor of cysteine proteases, N-ethylmaleimide, iodacetamide, and mercury and zinc ions. The normal physiological role of the enzyme is unknown, but it is not essential for the viability of yeast cells. Has aminopeptidase activity, shortening substrate peptides sequentially by 1 amino acid. Has bleomycin hydrolase activity, which can protect the cell from the toxic effects of bleomycin. Has homocysteine-thiolactonase activity, protecting the cell against homocysteine toxicity. Acts as a repressor in the GAL4 regulatory system, but this does not require either the peptidase or nucleic acid-binding activities. In Saccharomyces cerevisiae (strain JAY291) (Baker's yeast), this protein is Cysteine proteinase 1, mitochondrial (LAP3).